A 267-amino-acid polypeptide reads, in one-letter code: MSEVKIRGIVLDSLNYEENDKIITVYSDEFGKLSFIALGANKASSKNNYSLNVFSESDFEIFKSRKTQSISKLKTGILVRNNFKIAKSYNNYLFASIISSVILQEELFYNKDFKLFDMLREAIRNINDEVNPFSNMVWFLFYSLKNFGGYWELNKCYRCNKASKIYRKFDLQHYGLVCPNCINENEEEHDYEFIKYLQRMDNNTFFTIQKFPINVSFEIIISKLLFSYYLNEIGIYSYPMNEILKKEVYKDDTFWEYTHKVLTKNSI.

Belongs to the RecO family.

In terms of biological role, involved in DNA repair and RecF pathway recombination. The chain is DNA repair protein RecO from Mesoplasma florum (strain ATCC 33453 / NBRC 100688 / NCTC 11704 / L1) (Acholeplasma florum).